The chain runs to 600 residues: KIF-binding protein (600 aa).

Positions 384-434 (KAENEATEYSKIMQDYAEAYEHIAFFEENPENQAKMQKRRAKYLEDLLDLL) form a coiled coil.

The protein belongs to the KIF-binding protein family.

The protein resides in the cytoplasm. It localises to the cytoskeleton. The polypeptide is KIF-binding protein (Drosophila melanogaster (Fruit fly)).